The following is an 807-amino-acid chain: Glucocorticoid receptor (807 aa).

3 disordered regions span residues 1–47 (MDQG…LPSP), 246–284 (TDVNGTDQQHPLQHHQHQQQQHRHLLQHQQHQLHHQHQQ), and 412–438 (FSVSFSSSSPRTGENSSSAVPGLSKPS). A modulating region spans residues 1-444 (MDQGGLKRNC…SKPSGPTHKI (444 aa)). Residues 257–282 (LQHHQHQQQQHRHLLQHQQHQLHHQH) are compositionally biased toward basic residues. A compositionally biased stretch (low complexity) spans 412–421 (FSVSFSSSSP). 2 NR C4-type zinc fingers span residues 445–465 (CLVCSDEASGCHYGVVTCGSC) and 490–514 (CAGRNDCIIDKIRRKNCPACRFRKC). Positions 445–519 (CLVCSDEASG…RFRKCLQAGM (75 aa)) form a DNA-binding region, nuclear receptor. Residues 520–553 (NLEARKNKKLIKMKVHRPTGSAEPISNMPVPVIP) form a hinge region. Positions 554–788 (RMPQLVPTML…FPEMLAEIIT (235 aa)) constitute an NR LBD domain.

This sequence belongs to the nuclear hormone receptor family. NR3 subfamily. Heteromultimeric cytoplasmic complex with HSP90. Upon ligand binding the complex undergoes a conformation change and moves to the nucleus, where it dissociates. Binds to DNA as a homodimer, and as heterodimer with NR3C2. Interaction with numerous other transcription factors modulates transcription activation.

The protein resides in the cytoplasm. It localises to the nucleus. The protein localises to the mitochondrion. Its subcellular location is the cytoskeleton. It is found in the spindle. The protein resides in the microtubule organizing center. It localises to the centrosome. Its function is as follows. Receptor for glucocorticoids (GC). Has a dual mode of action: as a transcription factor that binds to glucocorticoid response elements (GRE), both for nuclear and mitochondrial DNA, and as a modulator of other transcription factors. Affects inflammatory responses, cellular proliferation and differentiation in target tissues. Involved in chromatin remodeling. Plays a role in rapid mRNA degradation by binding to the 5' UTR of target mRNAs and interacting with PNRC2 in a ligand-dependent manner which recruits the RNA helicase UPF1 and the mRNA-decapping enzyme DCP1A, leading to RNA decay. Could act as a coactivator for STAT5-dependent transcription upon growth hormone (GH) stimulation and could reveal an essential role of hepatic GR in the control of body growth. Mediates glucocorticoid-induced apoptosis. Promotes accurate chromosome segregation during mitosis. May act as a tumor suppressor. May play a negative role in adipogenesis through the regulation of lipolytic and antilipogenic gene expression. This is Glucocorticoid receptor (nr3c1) from Paralichthys olivaceus (Bastard halibut).